The sequence spans 359 residues: Palmitoyltransferase ERF2 (359 aa).

A disordered region spans residues 1–21; the sequence is MALVSRRSTRSESTSITKEEH. Over 1–75 the chain is Cytoplasmic; the sequence is MALVSRRSTR…RFRTVKGAKP (75 aa). A helical transmembrane segment spans residues 76–96; the sequence is LWLGVLLAIVCPMVLFSIFEA. The Lumenal segment spans residues 97–104; that stretch reads HKLWHTQN. Residues 105–125 form a helical membrane-spanning segment; it reads GYKVLVIFFYYFWVITLASFI. The Cytoplasmic segment spans residues 126-217; the sequence is RTATSDPGVL…NCIGKRNYRF (92 aa). Residues 173–223 enclose the DHHC domain; it reads KYCPSCRIWRPPRSSHCSTCNVCVMVHDHHCIWVNNCIGKRNYRFFLIFLL. Catalysis depends on Cys-203, which acts as the S-palmitoyl cysteine intermediate. A helical membrane pass occupies residues 218-238; it reads FLIFLLGAILSSVILLTNCAI. Residues 239–250 lie on the Lumenal side of the membrane; that stretch reads HIARESGGPRDC. A helical membrane pass occupies residues 251–271; the sequence is PVAILLLCYAGLTLWYPAILF. Residues 272–359 are Cytoplasmic-facing; sequence TYHIFMAGNQ…AHSFEKIQKI (88 aa).

The protein belongs to the DHHC palmitoyltransferase family. ERF2/ZDHHC9 subfamily. Interacts with SHR5. Autopalmitoylated.

The protein localises to the endoplasmic reticulum membrane. It carries out the reaction L-cysteinyl-[protein] + hexadecanoyl-CoA = S-hexadecanoyl-L-cysteinyl-[protein] + CoA. Its function is as follows. The ERF2-SHR5 complex is a palmitoyltransferase specific for Ras proteins. Palmitoylates RAS2, which is required for its proper plasma membrane localization. The sequence is that of Palmitoyltransferase ERF2 (ERF2) from Saccharomyces cerevisiae (strain ATCC 204508 / S288c) (Baker's yeast).